The following is a 615-amino-acid chain: Putative DNA ligase 205R (615 aa).

Lys101 acts as the N6-AMP-lysine intermediate in catalysis.

It belongs to the NAD-dependent DNA ligase family.

The enzyme catalyses NAD(+) + (deoxyribonucleotide)n-3'-hydroxyl + 5'-phospho-(deoxyribonucleotide)m = (deoxyribonucleotide)n+m + AMP + beta-nicotinamide D-nucleotide.. Catalyzes the formation of phosphodiester linkages between 5'-phosphoryl and 3'-hydroxyl groups in double-stranded DNA using NAD as a coenzyme and as the energy source for the reaction. The protein is Putative DNA ligase 205R of Invertebrate iridescent virus 6 (IIV-6).